A 318-amino-acid chain; its full sequence is Inactive dihydropteroate synthase 2 (318 aa).

The segment at 1 to 25 (MRSTPPASAGRSTPPALAGHSTPPA) is disordered. The Pterin-binding domain maps to 42-299 (ALIMAIVNRT…EVAATRRVLE (258 aa)).

The protein belongs to the DHPS family. As to quaternary structure, homodimer.

Has very low affinity for the DHPS substrate 6-hydroxymethyl-7,8-dihydropterin-pyrophosphate, but can bind the inhibitor dapsone. Seems to lack dihydropteroate synthase activity, and does probably not function in folate metabolism. This is Inactive dihydropteroate synthase 2 (folP2) from Mycobacterium bovis (strain ATCC BAA-935 / AF2122/97).